The following is a 158-amino-acid chain: Putative zinc-binding protein ORF9 (158 aa).

Residues 72–111 (CPVCGRAVVGPTVREACGHVTCNACETEACAVDRLCIGGG) form an RING-type; degenerate zinc finger. The interval 126 to 158 (GPRWRGPRPTRPEAHEAVQRSRGSSEDACTCAP) is disordered. Residues 135–150 (TRPEAHEAVQRSRGSS) are compositionally biased toward basic and acidic residues.

This Ictalurid herpesvirus 1 (strain Auburn) (IcHV-1) protein is Putative zinc-binding protein ORF9 (ORF9).